The sequence spans 309 residues: Ecotin-like protein 3 (309 aa).

Residues 140 to 309 form a disordered region; sequence QQELEAPAVS…KSGRDSRRNS (170 aa). Basic and acidic residues predominate over residues 156–167; the sequence is VRERQNNPEGHA. The span at 168–180 shows a compositional bias: low complexity; it reads HPVVVHSVESPEV. The segment covering 181–190 has biased composition (basic and acidic residues); sequence SGHKDGDQPM. A compositionally biased stretch (low complexity) spans 196-205; it reads LKQSCSNSSR. Positions 209–221 are enriched in polar residues; sequence HSASGSSPKNTPL. Positions 261-279 are enriched in basic and acidic residues; it reads SDSTSSRKDDQDSGYEKKV. A compositionally biased stretch (low complexity) spans 290 to 299; sequence SSPKRSASPK.

Belongs to the protease inhibitor I11 (ecotin) family.

In Leishmania braziliensis, this protein is Ecotin-like protein 3.